A 336-amino-acid chain; its full sequence is Ferredoxin--NADP reductase (336 aa).

Positions 34, 42, 47, 87, 121, 286, and 326 each coordinate FAD.

It belongs to the ferredoxin--NADP reductase type 2 family. As to quaternary structure, homodimer. FAD serves as cofactor.

It carries out the reaction 2 reduced [2Fe-2S]-[ferredoxin] + NADP(+) + H(+) = 2 oxidized [2Fe-2S]-[ferredoxin] + NADPH. This chain is Ferredoxin--NADP reductase, found in Leuconostoc mesenteroides subsp. mesenteroides (strain ATCC 8293 / DSM 20343 / BCRC 11652 / CCM 1803 / JCM 6124 / NCDO 523 / NBRC 100496 / NCIMB 8023 / NCTC 12954 / NRRL B-1118 / 37Y).